We begin with the raw amino-acid sequence, 260 residues long: MTKTLTKHLQAIKDSKRGIFVPYIMAGDHAKGLDGLFETITLLENSGVSAIEVGIPWSDPVADGPIIELAGQRSLAKDVTLTAIIKKLQEKKTQVPLVIMTYINPVYQYGIEAFVKDLAETSVKGLIIPDLPNEHADFITPYLRDSDIALVPLVSLTTGIDRQKQLIDGAEGFIYAVAINGVTGKTGNYRDDLDKHLSNLTAYADIPVLTGFGVSTEEDIKRFNAVSDGVIVGSKIVRDLHDGKEEEVAEFVTFGSHFEK.

Catalysis depends on proton acceptor residues E52 and D63.

The protein belongs to the TrpA family. Tetramer of two alpha and two beta chains.

The enzyme catalyses (1S,2R)-1-C-(indol-3-yl)glycerol 3-phosphate + L-serine = D-glyceraldehyde 3-phosphate + L-tryptophan + H2O. Its pathway is amino-acid biosynthesis; L-tryptophan biosynthesis; L-tryptophan from chorismate: step 5/5. In terms of biological role, the alpha subunit is responsible for the aldol cleavage of indoleglycerol phosphate to indole and glyceraldehyde 3-phosphate. The polypeptide is Tryptophan synthase alpha chain (Streptococcus thermophilus (strain ATCC BAA-250 / LMG 18311)).